Reading from the N-terminus, the 397-residue chain is Succinyl-diaminopimelate desuccinylase (397 aa).

H73 lines the Zn(2+) pocket. D75 is a catalytic residue. D106 provides a ligand contact to Zn(2+). The Proton acceptor role is filled by E140. Zn(2+) contacts are provided by E141, E169, and H366.

Belongs to the peptidase M20A family. DapE subfamily. As to quaternary structure, homodimer. Zn(2+) is required as a cofactor. It depends on Co(2+) as a cofactor.

It catalyses the reaction N-succinyl-(2S,6S)-2,6-diaminopimelate + H2O = (2S,6S)-2,6-diaminopimelate + succinate. Its pathway is amino-acid biosynthesis; L-lysine biosynthesis via DAP pathway; LL-2,6-diaminopimelate from (S)-tetrahydrodipicolinate (succinylase route): step 3/3. Functionally, catalyzes the hydrolysis of N-succinyl-L,L-diaminopimelic acid (SDAP), forming succinate and LL-2,6-diaminopimelate (DAP), an intermediate involved in the bacterial biosynthesis of lysine and meso-diaminopimelic acid, an essential component of bacterial cell walls. This chain is Succinyl-diaminopimelate desuccinylase, found in Rhizobium rhizogenes (strain K84 / ATCC BAA-868) (Agrobacterium radiobacter).